A 451-amino-acid polypeptide reads, in one-letter code: Tubulin gamma-1 chain (451 aa).

S131 carries the post-translational modification Phosphoserine; by BRSK1. 142–148 serves as a coordination point for GTP; that stretch reads AGGTGSG.

This sequence belongs to the tubulin family. As to quaternary structure, component of the gamma-tubulin ring complex (gTuRC) consisting of TUBGCP2, TUBGCP3, TUBGCP4, TUBGCP5 and TUBGCP6 and gamma-tubulin TUBG1 or TUBG2. TUBGCP2, TUBGCP3, TUBGCP4, TUBGCP5 and TUBGCP6 assemble in a 5:5:2:1:1 stoichiometry; each is associated with a gamma-tubulin, thereby arranging 14 gamma-tubulins in a helical manner. Gamma-tubulin at the first position is blocked by TUBGCP3 at the last position, allowing 13 protafilaments to grow into a microtubule. The gTuRC (via TUBGCP3 and TUBGCP6) interacts with ACTB and MZT1; the interactions form a luminal bridge that stabilizes the initial structure during complex assembly. The gTuRC (via TUBGCP2) interacts with MZT2A/MZT2B and CDK5RAP2 (via CM1 motif); the interactions play a role in gTuRC activation. Interacts with alpha-beta tubulin heterodimers; the interaction allows microtubules to nucleate from the gTuRC. Interacts with B9D2. Interacts with CDK5RAP2; the interaction is leading to centrosomal localization of TUBG1 and CDK5RAP2. Interacts with CIMAP3. Interacts with SAS6 and NUP62 at the centrosome. Interacts with EML3 (phosphorylated at 'Thr-881') and HAUS8. Interacts with DNM2; this interaction may participate in centrosome cohesion. Interacts with CCDC66. Phosphorylation at Ser-131 by BRSK1 regulates centrosome duplication, possibly by mediating relocation of gamma-tubulin and its associated proteins from the cytoplasm to the centrosome.

Its subcellular location is the cytoplasm. The protein localises to the cytoskeleton. It localises to the microtubule organizing center. It is found in the centrosome. The protein resides in the spindle. Its function is as follows. Tubulin is the major constituent of microtubules, protein filaments consisting of alpha- and beta-tubulin heterodimers. Gamma-tubulin is a key component of the gamma-tubulin ring complex (gTuRC) which mediates microtubule nucleation. The gTuRC regulates the minus-end nucleation of alpha-beta tubulin heterodimers that grow into microtubule protafilaments, a critical step in centrosome duplication and spindle formation. The protein is Tubulin gamma-1 chain of Mus musculus (Mouse).